The sequence spans 152 residues: Ribosomal RNA large subunit methyltransferase H (152 aa).

S-adenosyl-L-methionine-binding positions include Leu-65, Gly-96, and 115-120 (LGPMTW).

The protein belongs to the RNA methyltransferase RlmH family. Homodimer.

The protein localises to the cytoplasm. The enzyme catalyses pseudouridine(1915) in 23S rRNA + S-adenosyl-L-methionine = N(3)-methylpseudouridine(1915) in 23S rRNA + S-adenosyl-L-homocysteine + H(+). Its function is as follows. Specifically methylates the pseudouridine at position 1915 (m3Psi1915) in 23S rRNA. The polypeptide is Ribosomal RNA large subunit methyltransferase H (Gluconacetobacter diazotrophicus (strain ATCC 49037 / DSM 5601 / CCUG 37298 / CIP 103539 / LMG 7603 / PAl5)).